A 671-amino-acid polypeptide reads, in one-letter code: NADH-quinone oxidoreductase subunit G (671 aa).

One can recognise a 2Fe-2S ferredoxin-type domain in the interval 1–78 (MIKLNIDGSE…GMVIHTDTPM (78 aa)). Positions 34, 45, 48, and 62 each coordinate [2Fe-2S] cluster. The 40-residue stretch at 78–117 (MVKKAREGVMEFLLINHPLDCPICDQGGECDLQDQAFRYG) folds into the 4Fe-4S His(Cys)3-ligated-type domain. [4Fe-4S] cluster-binding residues include histidine 94, cysteine 98, cysteine 101, cysteine 107, cysteine 146, cysteine 149, cysteine 152, and cysteine 196. Residues 215–271 (LKHTASIGVHDAEGSNIRIDSRGDEVMRILPRVNEEINEEWLSDKNRFSYDGLKYQR) enclose the 4Fe-4S Mo/W bis-MGD-type domain.

Belongs to the complex I 75 kDa subunit family. It depends on [2Fe-2S] cluster as a cofactor. [4Fe-4S] cluster is required as a cofactor.

The enzyme catalyses a quinone + NADH + 5 H(+)(in) = a quinol + NAD(+) + 4 H(+)(out). NDH-1 shuttles electrons from NADH, via FMN and iron-sulfur (Fe-S) centers, to quinones in the respiratory chain. Couples the redox reaction to proton translocation (for every two electrons transferred, four hydrogen ions are translocated across the cytoplasmic membrane), and thus conserves the redox energy in a proton gradient. The polypeptide is NADH-quinone oxidoreductase subunit G (nuoG) (Rickettsia felis (strain ATCC VR-1525 / URRWXCal2) (Rickettsia azadi)).